Reading from the N-terminus, the 281-residue chain is 3-methyl-2-oxobutanoate hydroxymethyltransferase (281 aa).

A disordered region spans residues 1 to 20 (MSEQTIYGANTPGGSGPRTK). Mg(2+)-binding residues include D62 and D101. Residues 62 to 63 (DS), D101, and K131 contribute to the 3-methyl-2-oxobutanoate site. E133 contacts Mg(2+). The active-site Proton acceptor is E199.

Belongs to the PanB family. Homodecamer; pentamer of dimers. The cofactor is Mg(2+).

The protein localises to the cytoplasm. It catalyses the reaction 3-methyl-2-oxobutanoate + (6R)-5,10-methylene-5,6,7,8-tetrahydrofolate + H2O = 2-dehydropantoate + (6S)-5,6,7,8-tetrahydrofolate. It functions in the pathway cofactor biosynthesis; (R)-pantothenate biosynthesis; (R)-pantoate from 3-methyl-2-oxobutanoate: step 1/2. In terms of biological role, catalyzes the reversible reaction in which hydroxymethyl group from 5,10-methylenetetrahydrofolate is transferred onto alpha-ketoisovalerate to form ketopantoate. This chain is 3-methyl-2-oxobutanoate hydroxymethyltransferase, found in Mycobacterium bovis (strain ATCC BAA-935 / AF2122/97).